We begin with the raw amino-acid sequence, 344 residues long: N-acetyl-gamma-glutamyl-phosphate reductase (344 aa).

The active site involves Cys150.

Belongs to the NAGSA dehydrogenase family. Type 1 subfamily.

The protein localises to the cytoplasm. It carries out the reaction N-acetyl-L-glutamate 5-semialdehyde + phosphate + NADP(+) = N-acetyl-L-glutamyl 5-phosphate + NADPH + H(+). It participates in amino-acid biosynthesis; L-arginine biosynthesis; N(2)-acetyl-L-ornithine from L-glutamate: step 3/4. Catalyzes the NADPH-dependent reduction of N-acetyl-5-glutamyl phosphate to yield N-acetyl-L-glutamate 5-semialdehyde. This Pseudomonas savastanoi pv. phaseolicola (strain 1448A / Race 6) (Pseudomonas syringae pv. phaseolicola (strain 1448A / Race 6)) protein is N-acetyl-gamma-glutamyl-phosphate reductase.